The primary structure comprises 129 residues: Cytochrome c oxidase subunit 5B, mitochondrial (129 aa).

The transit peptide at 1–31 (MASRLLRGAGTLAAQALRARGPSGAAAMRSM) directs the protein to the mitochondrion. N6-acetyllysine is present on residues Lys-68 and Lys-86. Zn(2+)-binding residues include Cys-91, Cys-93, Cys-113, and Cys-116. An N6-acetyllysine modification is found at Lys-121.

Belongs to the cytochrome c oxidase subunit 5B family. As to quaternary structure, component of the cytochrome c oxidase (complex IV, CIV), a multisubunit enzyme composed of 14 subunits. The complex is composed of a catalytic core of 3 subunits MT-CO1, MT-CO2 and MT-CO3, encoded in the mitochondrial DNA, and 11 supernumerary subunits COX4I1 (or COX4I2), COX5A, COX5B, COX6A1 (or COX6A2), COX6B1 (or COX6B2), COX6C, COX7A2 (or COX7A1), COX7B, COX7C, COX8A and NDUFA4, which are encoded in the nuclear genome. The complex exists as a monomer or a dimer and forms supercomplexes (SCs) in the inner mitochondrial membrane with NADH-ubiquinone oxidoreductase (complex I, CI) and ubiquinol-cytochrome c oxidoreductase (cytochrome b-c1 complex, complex III, CIII), resulting in different assemblies (supercomplex SCI(1)III(2)IV(1) and megacomplex MCI(2)III(2)IV(2)).

It is found in the mitochondrion inner membrane. Its pathway is energy metabolism; oxidative phosphorylation. In terms of biological role, component of the cytochrome c oxidase, the last enzyme in the mitochondrial electron transport chain which drives oxidative phosphorylation. The respiratory chain contains 3 multisubunit complexes succinate dehydrogenase (complex II, CII), ubiquinol-cytochrome c oxidoreductase (cytochrome b-c1 complex, complex III, CIII) and cytochrome c oxidase (complex IV, CIV), that cooperate to transfer electrons derived from NADH and succinate to molecular oxygen, creating an electrochemical gradient over the inner membrane that drives transmembrane transport and the ATP synthase. Cytochrome c oxidase is the component of the respiratory chain that catalyzes the reduction of oxygen to water. Electrons originating from reduced cytochrome c in the intermembrane space (IMS) are transferred via the dinuclear copper A center (CU(A)) of subunit 2 and heme A of subunit 1 to the active site in subunit 1, a binuclear center (BNC) formed by heme A3 and copper B (CU(B)). The BNC reduces molecular oxygen to 2 water molecules using 4 electrons from cytochrome c in the IMS and 4 protons from the mitochondrial matrix. The polypeptide is Cytochrome c oxidase subunit 5B, mitochondrial (COX5B) (Homo sapiens (Human)).